The sequence spans 122 residues: UPF0102 protein CLL_A1253 (122 aa).

It belongs to the UPF0102 family.

This is UPF0102 protein CLL_A1253 from Clostridium botulinum (strain Eklund 17B / Type B).